Consider the following 340-residue polypeptide: Short-chain dehydrogenase/reductase ffsI (340 aa).

NADP(+) contacts are provided by Leu46, Arg71, Asp96, Asn123, Tyr211, and Lys215. Tyr211 functions as the Proton acceptor in the catalytic mechanism. Lys215 acts as the Lowers pKa of active site Tyr in catalysis.

It belongs to the short-chain dehydrogenases/reductases (SDR) family.

It functions in the pathway mycotoxin biosynthesis. Its function is as follows. Short-chain dehydrogenase/reductase; part of the gene cluster that mediates the biosynthesis of the cytotoxic leucine-containing cytochalasans, including aspochalasin C, aspochalasin E, TMC-169, flavichalasine F, aspergillin PZ, aspochalasin M and flavichalasine G. The first step in the pathway is catalyzed by the hybrid PKS-NRPS ffsA that utilizes 8 units of malonyl-CoA to iteratively assemble the octaketide chain before addition of L-leucine by the C-terminal NRPS modules. Because ffsA lacks a designated enoylreductase (ER) domain, the required activity is provided the enoyl reductase fssC. The methyltransferase (MT) domain of ffsA catalyzes the alpha-methylation at C10 and C14 using S-adenosyl-L-methionine as the methyl-donating cosubstrate. Reduction by the hydrolyase ffsE, followed by dehydration and intra-molecular Diels-Alder cyclization by the Diels-Alderase ffsF then yield the required isoindolone-fused macrocycle. A number of oxidative steps catalyzed by the tailoring cytochrome P450 monooxygenase ffsD, the FAD-linked oxidoreductase ffsJ and the short-chain dehydrogenase/reductase ffsI, are further required to afford the final products. The chain is Short-chain dehydrogenase/reductase ffsI from Aspergillus flavipes.